The chain runs to 633 residues: 1-deoxy-D-xylulose-5-phosphate synthase (633 aa).

Thiamine diphosphate contacts are provided by residues His72 and 113–115; that span reads GHS. Asp144 is a Mg(2+) binding site. Thiamine diphosphate contacts are provided by residues 145 to 146, Asn173, Tyr284, and Glu367; that span reads GA. Asn173 provides a ligand contact to Mg(2+).

Belongs to the transketolase family. DXPS subfamily. In terms of assembly, homodimer. It depends on Mg(2+) as a cofactor. The cofactor is thiamine diphosphate.

The catalysed reaction is D-glyceraldehyde 3-phosphate + pyruvate + H(+) = 1-deoxy-D-xylulose 5-phosphate + CO2. The protein operates within metabolic intermediate biosynthesis; 1-deoxy-D-xylulose 5-phosphate biosynthesis; 1-deoxy-D-xylulose 5-phosphate from D-glyceraldehyde 3-phosphate and pyruvate: step 1/1. Its function is as follows. Catalyzes the acyloin condensation reaction between C atoms 2 and 3 of pyruvate and glyceraldehyde 3-phosphate to yield 1-deoxy-D-xylulose-5-phosphate (DXP). The sequence is that of 1-deoxy-D-xylulose-5-phosphate synthase from Bacillus licheniformis (strain ATCC 14580 / DSM 13 / JCM 2505 / CCUG 7422 / NBRC 12200 / NCIMB 9375 / NCTC 10341 / NRRL NRS-1264 / Gibson 46).